A 107-amino-acid polypeptide reads, in one-letter code: Nucleoid-associated protein BMEA_A0033 (107 aa).

Belongs to the YbaB/EbfC family. As to quaternary structure, homodimer.

Its subcellular location is the cytoplasm. The protein localises to the nucleoid. Binds to DNA and alters its conformation. May be involved in regulation of gene expression, nucleoid organization and DNA protection. The polypeptide is Nucleoid-associated protein BMEA_A0033 (Brucella melitensis biotype 2 (strain ATCC 23457)).